We begin with the raw amino-acid sequence, 343 residues long: Palmitoyltransferase ZDHHC4 (343 aa).

Residues 1 to 2 (MD) are Lumenal-facing. Residues 3 to 23 (FLVLFLFYLAFLLICVVLICI) form a helical membrane-spanning segment. Residues 24–67 (FTKSQRLKAVVLGGAQVCSRVIPQCLQRAVQTLLHQLFHTRHPT) lie on the Cytoplasmic side of the membrane. A helical transmembrane segment spans residues 68–88 (FIVLHLLLQGLVYAEYTCEVF). Over 89 to 100 (GYCRELEFSLPY) the chain is Lumenal. A helical membrane pass occupies residues 101-121 (LLLPYVLLSVNLVFFTLTCAA). At 122–193 (NPGTITKANE…NCIGAWNTRY (72 aa)) the chain is on the cytoplasmic side. The DHHC domain maps to 149-199 (SRCPTCDLRKPARSKHCRLCDRCVHRFDHHCVWVNNCIGAWNTRYFLIYLL). The S-palmitoyl cysteine intermediate role is filled by C179. The helical transmembrane segment at 194–214 (FLIYLLTLTASAATIATVTAA) threads the bilayer. Over 215-255 (FLLRLVTVSDLYQETYLDDVGHFQAVDTVFLIQHLFLAFPR) the chain is Lumenal. A helical membrane pass occupies residues 256–276 (IVFLLGFVIVLSMLLAGYLCF). Over 277-343 (ALYLAATNQT…ATPSYKKKEK (67 aa)) the chain is Cytoplasmic. Positions 340–343 (KKEK) match the Di-lysine motif motif.

Belongs to the DHHC palmitoyltransferase family. In terms of assembly, interacts with CPT1A.

It localises to the endoplasmic reticulum membrane. The protein resides in the golgi apparatus membrane. Its subcellular location is the cell membrane. It catalyses the reaction L-cysteinyl-[protein] + hexadecanoyl-CoA = S-hexadecanoyl-L-cysteinyl-[protein] + CoA. Functionally, palmitoyltransferase that could catalyze the addition of palmitate onto protein substrates including the D(2) dopamine receptor DRD2, GSK3B or MAVS. Mediates GSK3B palmitoylation to prevent its AKT1-mediated phosphorylation leading to activation of the STAT3 signaling pathway. Also catalyzes MAVS palmitoylation which promotes its stabilization and activation by inhibiting 'Lys-48'- but facilitating 'Lys-63'-linked ubiquitination. In Mus musculus (Mouse), this protein is Palmitoyltransferase ZDHHC4.